We begin with the raw amino-acid sequence, 349 residues long: S-adenosylmethionine:tRNA ribosyltransferase-isomerase (349 aa).

The protein belongs to the QueA family. Monomer.

Its subcellular location is the cytoplasm. It catalyses the reaction 7-aminomethyl-7-carbaguanosine(34) in tRNA + S-adenosyl-L-methionine = epoxyqueuosine(34) in tRNA + adenine + L-methionine + 2 H(+). It participates in tRNA modification; tRNA-queuosine biosynthesis. Transfers and isomerizes the ribose moiety from AdoMet to the 7-aminomethyl group of 7-deazaguanine (preQ1-tRNA) to give epoxyqueuosine (oQ-tRNA). This is S-adenosylmethionine:tRNA ribosyltransferase-isomerase from Ruegeria pomeroyi (strain ATCC 700808 / DSM 15171 / DSS-3) (Silicibacter pomeroyi).